Reading from the N-terminus, the 354-residue chain is Ribosomal RNA large subunit methyltransferase M (354 aa).

Residues serine 183, 216 to 219 (SPGG), aspartate 235, aspartate 255, and aspartate 271 each bind S-adenosyl-L-methionine. Lysine 300 (proton acceptor) is an active-site residue.

This sequence belongs to the class I-like SAM-binding methyltransferase superfamily. RNA methyltransferase RlmE family. RlmM subfamily. As to quaternary structure, monomer.

The protein localises to the cytoplasm. It catalyses the reaction cytidine(2498) in 23S rRNA + S-adenosyl-L-methionine = 2'-O-methylcytidine(2498) in 23S rRNA + S-adenosyl-L-homocysteine + H(+). Functionally, catalyzes the 2'-O-methylation at nucleotide C2498 in 23S rRNA. In Pseudomonas putida (strain GB-1), this protein is Ribosomal RNA large subunit methyltransferase M.